Consider the following 88-residue polypeptide: Large ribosomal subunit protein bL27 (88 aa).

Residues 1 to 23 (MAHKKGTGSTRNGRDSNSKRLGV) form a disordered region.

The protein belongs to the bacterial ribosomal protein bL27 family.

The protein is Large ribosomal subunit protein bL27 of Synechococcus sp. (strain CC9902).